The sequence spans 228 residues: ATP-dependent dethiobiotin synthetase BioD 1 (228 aa).

13–18 (EVGKTV) contacts ATP. Thr-17 is a binding site for Mg(2+). Residue Lys-38 is part of the active site. Residue Ser-42 coordinates substrate. Residues Asp-55, 116–119 (EGAG), 176–177 (ND), and 205–207 (PWL) each bind ATP. Asp-55 and Glu-116 together coordinate Mg(2+).

This sequence belongs to the dethiobiotin synthetase family. In terms of assembly, homodimer. Mg(2+) is required as a cofactor.

It is found in the cytoplasm. It catalyses the reaction (7R,8S)-7,8-diammoniononanoate + CO2 + ATP = (4R,5S)-dethiobiotin + ADP + phosphate + 3 H(+). It functions in the pathway cofactor biosynthesis; biotin biosynthesis; biotin from 7,8-diaminononanoate: step 1/2. Functionally, catalyzes a mechanistically unusual reaction, the ATP-dependent insertion of CO2 between the N7 and N8 nitrogen atoms of 7,8-diaminopelargonic acid (DAPA, also called 7,8-diammoniononanoate) to form a ureido ring. The protein is ATP-dependent dethiobiotin synthetase BioD 1 of Salmonella typhimurium (strain LT2 / SGSC1412 / ATCC 700720).